The primary structure comprises 34 residues: Photosystem II reaction center protein T (34 aa).

A helical membrane pass occupies residues 3–23 (ALVYTFLLVSTLGIIFFAIFF).

It belongs to the PsbT family. In terms of assembly, PSII is composed of 1 copy each of membrane proteins PsbA, PsbB, PsbC, PsbD, PsbE, PsbF, PsbH, PsbI, PsbJ, PsbK, PsbL, PsbM, PsbT, PsbY, PsbZ, Psb30/Ycf12, at least 3 peripheral proteins of the oxygen-evolving complex and a large number of cofactors. It forms dimeric complexes.

It is found in the plastid. The protein resides in the chloroplast thylakoid membrane. Found at the monomer-monomer interface of the photosystem II (PS II) dimer, plays a role in assembly and dimerization of PSII. PSII is a light-driven water plastoquinone oxidoreductase, using light energy to abstract electrons from H(2)O, generating a proton gradient subsequently used for ATP formation. The protein is Photosystem II reaction center protein T of Solanum lycopersicum (Tomato).